The primary structure comprises 229 residues: 3-dehydroquinate dehydratase (229 aa).

3-dehydroquinate contacts are provided by residues Glu-33–Arg-35 and Arg-65. Catalysis depends on His-121, which acts as the Proton donor/acceptor. Residue Lys-146 is the Schiff-base intermediate with substrate of the active site. 3-dehydroquinate is bound by residues Arg-188, Ser-207, and Gln-211.

It belongs to the type-I 3-dehydroquinase family. Homodimer.

The catalysed reaction is 3-dehydroquinate = 3-dehydroshikimate + H2O. Its pathway is metabolic intermediate biosynthesis; chorismate biosynthesis; chorismate from D-erythrose 4-phosphate and phosphoenolpyruvate: step 3/7. Involved in the third step of the chorismate pathway, which leads to the biosynthesis of aromatic amino acids. Catalyzes the cis-dehydration of 3-dehydroquinate (DHQ) and introduces the first double bond of the aromatic ring to yield 3-dehydroshikimate. In Lactococcus lactis subsp. cremoris (strain SK11), this protein is 3-dehydroquinate dehydratase.